A 272-amino-acid polypeptide reads, in one-letter code: Tryptophan synthase alpha chain (272 aa).

Residues E53 and D64 each act as proton acceptor in the active site.

This sequence belongs to the TrpA family. Tetramer of two alpha and two beta chains.

The enzyme catalyses (1S,2R)-1-C-(indol-3-yl)glycerol 3-phosphate + L-serine = D-glyceraldehyde 3-phosphate + L-tryptophan + H2O. The protein operates within amino-acid biosynthesis; L-tryptophan biosynthesis; L-tryptophan from chorismate: step 5/5. Its function is as follows. The alpha subunit is responsible for the aldol cleavage of indoleglycerol phosphate to indole and glyceraldehyde 3-phosphate. The sequence is that of Tryptophan synthase alpha chain from Xanthomonas campestris pv. campestris (strain 8004).